Here is a 163-residue protein sequence, read N- to C-terminus: Probable ribosome biogenesis protein RLP24 (163 aa).

Belongs to the eukaryotic ribosomal protein eL24 family. Associated with nucleolar and cytoplasmic pre-60S particles. At the end of biogenesis it dissociates from cytoplasmic pre-60S particles and is likely to be exchanged for its ribosomal homolog, RPL24.

It localises to the nucleus. The protein resides in the nucleolus. In terms of biological role, involved in the biogenesis of the 60S ribosomal subunit. Ensures the docking of GTPBP4/NOG1 to pre-60S particles. The chain is Probable ribosome biogenesis protein RLP24 (Rsl24d1) from Mus musculus (Mouse).